We begin with the raw amino-acid sequence, 518 residues long: Protein translocase subunit SecD (518 aa).

The next 6 helical transmembrane spans lie at 9 to 29, 356 to 376, 377 to 397, 406 to 426, 463 to 483, and 486 to 506; these read IVLSIICTVFAIICALPNFIQ, GKKAGLIGFVAVCIFMILSYG, VIGLFANIALILALLYILALL, LPGIAGIILTIGMAVDANVLI, LIVAFALYIFGVGAIKGFAVA, and IGIISSMFSAIIITKLLIDVW.

The protein belongs to the SecD/SecF family. SecD subfamily. In terms of assembly, forms a complex with SecF. Part of the essential Sec protein translocation apparatus which comprises SecA, SecYEG and auxiliary proteins SecDF-YajC and YidC.

It is found in the cell inner membrane. In terms of biological role, part of the Sec protein translocase complex. Interacts with the SecYEG preprotein conducting channel. SecDF uses the proton motive force (PMF) to complete protein translocation after the ATP-dependent function of SecA. The protein is Protein translocase subunit SecD of Rickettsia prowazekii (strain Madrid E).